We begin with the raw amino-acid sequence, 395 residues long: Guanine nucleotide-binding protein subunit beta-5 (395 aa).

7 WD repeats span residues 103–142 (GHGNKVLCMDWCKDKRRIVSSSQDGKVIVWDSFTTNKEHA), 145–184 (MPCTWVMACAYAPSGCAIACGGLDNKCSVYPLTFDKNENM), 193–234 (MHTN…QSFH), 236–278 (HGAD…QAFE), 279–318 (THESDINSVRYYPSGDAFASGSDDATCRLYDLRADREVAI), 320–362 (SKES…RVSI), and 365–394 (GHENRVSTLRVSPDGTAFCSGSWDHTLRVW).

Belongs to the WD repeat G protein beta family. Component of a complex composed of RGS9 (isoform RGS9-1), GNB5 and RGS9BP; within this complex, the presence of GNB5 stabilizes both itself and RGS9 and increases RGS9 GTPase-activating protein (GAP) activity. Interacts with RGS7, forming the RGS7-GNB5 complex; within this complex, the presence of GNB5 increases RGS7 GTPase-activating protein (GAP) activity. Interacts with GPR158; promotes the GTPase activator activity of the RGS7-GNB5 complex in absence of glycine, in contrast GTPase activator activity of the RGS7-GNB5 complex is inhibited in presence of glycine. Interacts with RGS6. As to expression, widely expressed.

It localises to the membrane. Enhances GTPase-activating protein (GAP) activity of regulator of G protein signaling (RGS) proteins, such as RGS7 and RGS9, hence involved in the termination of the signaling initiated by the G protein coupled receptors (GPCRs) by accelerating the GTP hydrolysis on the G-alpha subunits, thereby promoting their inactivation. Increases RGS7 GTPase-activating protein (GAP) activity, thereby regulating mood and cognition. Increases RGS9 GTPase-activating protein (GAP) activity, hence contributes to the deactivation of G protein signaling initiated by D(2) dopamine receptors. May play an important role in neuronal signaling, including in the parasympathetic, but not sympathetic, control of heart rate. The protein is Guanine nucleotide-binding protein subunit beta-5 (GNB5) of Homo sapiens (Human).